Consider the following 195-residue polypeptide: Holliday junction branch migration complex subunit RuvA (195 aa).

The tract at residues Met1–Arg66 is domain I. Residues Thr67–Asn141 are domain II. Residue Asn141 is a region of interest, flexible linker. The interval Asn141–Asn195 is domain III.

Belongs to the RuvA family. As to quaternary structure, homotetramer. Forms an RuvA(8)-RuvB(12)-Holliday junction (HJ) complex. HJ DNA is sandwiched between 2 RuvA tetramers; dsDNA enters through RuvA and exits via RuvB. An RuvB hexamer assembles on each DNA strand where it exits the tetramer. Each RuvB hexamer is contacted by two RuvA subunits (via domain III) on 2 adjacent RuvB subunits; this complex drives branch migration. In the full resolvosome a probable DNA-RuvA(4)-RuvB(12)-RuvC(2) complex forms which resolves the HJ.

The protein resides in the cytoplasm. Functionally, the RuvA-RuvB-RuvC complex processes Holliday junction (HJ) DNA during genetic recombination and DNA repair, while the RuvA-RuvB complex plays an important role in the rescue of blocked DNA replication forks via replication fork reversal (RFR). RuvA specifically binds to HJ cruciform DNA, conferring on it an open structure. The RuvB hexamer acts as an ATP-dependent pump, pulling dsDNA into and through the RuvAB complex. HJ branch migration allows RuvC to scan DNA until it finds its consensus sequence, where it cleaves and resolves the cruciform DNA. This chain is Holliday junction branch migration complex subunit RuvA, found in Ureaplasma parvum serovar 3 (strain ATCC 27815 / 27 / NCTC 11736).